Here is a 2587-residue protein sequence, read N- to C-terminus: Clavatol synthase claF (2587 aa).

The N-terminal acylcarrier protein transacylase domain (SAT) stretch occupies residues 93–256 (LLSPLVVIVQ…TEVALSGRFH (164 aa)). Cysteine 137 (nucleophile; for transacylase activity) is an active-site residue. The active-site Proton donor/acceptor; for transacylase activity is histidine 256. Positions 383-799 (DDQIAVIGMA…GSNASMIITQ (417 aa)) constitute a Ketosynthase family 3 (KS3) domain. Active-site for beta-ketoacyl synthase activity residues include cysteine 548, histidine 683, and histidine 722. The tract at residues 912-1222 (CFGGQISTYV…ESLPLLAEAT (311 aa)) is malonyl-CoA:ACP transacylase (MAT) domain. Residues 1284 to 1416 (PKGLTTFIGF…GSIVFLPASD (133 aa)) are N-terminal hotdog fold. A PKS/mFAS DH domain is found at 1284–1595 (PKGLTTFIGF…YRLVPMDSMR (312 aa)). The segment at 1315–1593 (LTSANVALNT…ISYRLVPMDS (279 aa)) is product template (PT) domain. The interval 1436–1595 (ASLLQGNGAD…YRLVPMDSMR (160 aa)) is C-terminal hotdog fold. The interval 1609-1635 (STAAVSSKSTPVHAPTPTTTVSSTPSS) is disordered. A compositionally biased stretch (low complexity) spans 1617 to 1635 (STPVHAPTPTTTVSSTPSS). A Carrier domain is found at 1654-1728 (PDISAKMCEI…SLVSCIRSTL (75 aa)). Serine 1688 is modified (O-(pantetheine 4'-phosphoryl)serine). Active-site for methyltransferase activity residues include tyrosine 1947, histidine 2059, and glutamate 2085. Residues 1952–2126 (VNTVWIKQLE…ATYWEKVLQS (175 aa)) are methyltransferase (CMeT) domain. Positions 2208 to 2452 (SLSSGQCVLV…KILPELDGTL (245 aa)) are NADPH-binding (R) domain.

It depends on pantetheine 4'-phosphate as a cofactor.

The enzyme catalyses 3 malonyl-CoA + acetyl-CoA + AH2 + 2 S-adenosyl-L-methionine + H(+) = clavatol + A + 2 S-adenosyl-L-homocysteine + 3 CO2 + 4 CoA + H2O. It participates in secondary metabolite biosynthesis. In terms of biological role, non-reducing polyketide synthase; part of the cla gene cluster that produces clavatol and ortho-quinone methide. The clavatol biosynthesis cluster cla and the terrestric acid cluster tra are both involved in the production of peniphenones and penilactones. The non-reducing PKS claF is responsible for the formation of clavatol from successive condensations of 3 malonyl-CoA units, presumably with a simple acetyl-CoA starter unit, and 2 methylation steps. The esterase claE probably collaborates with claF by catalyzing the hydrolysis of ACP-bound acyl intermediates to free the ACP from stalled intermediates. The clavatol oxidase claD then converts clavatol to hydroxyclavatol. Spontaneous dehydration of hydroxyclavatol leads to the accumulation of the highly active ortho-quinone methide. On the other hand, the PKS-NRPS hybrid traA is involved in the formation of crustosic acid, with the help of traB and traD. The polyketide synthase module (PKS) of traA is responsible for the synthesis of the polyketide backbone via the condensation of an acetyl-CoA starter unit with 3 malonyl-CoA units. The downstream nonribosomal peptide synthetase (NRPS) module then amidates the carboxyl end of the polyketide with L-malic acid. Because traA lacks a designated enoylreductase (ER) domain, the required activity is provided the enoyl reductase traG. Crustosic acid undergoes decarboxylation and isomerization to the terrestric acid, catalyzed by the 2-oxoglutarate-dependent dioxygenase traH. Both acids are further converted to the 2 gamma-butyrolactones (R)-5-methyltetronic acid and (S)-5-carboxylmethyltetronic acid, with involvement of the cytochrome P450 monooxygenase claJ. Spontaneous addition of the methide to these gamma-butyrolactones leads to peniphenone D and penilactone D, which undergo again stereospecific attacking by methide to give penilactones A and B. The sequence is that of Clavatol synthase claF from Penicillium crustosum (Blue mold fungus).